The primary structure comprises 427 residues: MSSVVVVGAQWGDEGKGKITDFLAQKADLVARYQGGNNAGHTVVVKGKEFKLHLIPSGILYPDKTCIIGNGVVIDPGVLIEELKYLESEGISADNLRISGRAHVIMPYHRRLDEVEEERRGANKIGTTKRGIGPCYVDKIARVGIRMADLLDPEEFRARLEQNVAAKNELLEKIYGVDGFDAQAIFDEYRAYAERLQAYITDTSVLLDDARKEGKNILFEGAQGTLLDIDHGTYPFVTSSHPIGGGATVGAGIGPTTINKILGVVKAYTTRVGEGPFPTELNDEMGDLIRKAGHEFGTTTGRPRRCGWFDAVIMRYSVRVSGLTCMAVTKLDVLDQLPVIKICVGYRYQDEVITHFPESLKKLAQCEPVYEEMPGWMSDTTGCRTMEELPEKARRYVKRLEELCGCPALLLAVGPDREQTIELGEAF.

Residues 12 to 18 (GDEGKGK) and 40 to 42 (GHT) each bind GTP. Residue aspartate 13 is the Proton acceptor of the active site. The Mg(2+) site is built by aspartate 13 and glycine 40. IMP is bound by residues 13-16 (DEGK), 38-41 (NAGH), threonine 128, arginine 142, glutamine 223, threonine 238, and arginine 302. The active-site Proton donor is histidine 41. A substrate-binding site is contributed by 298 to 304 (TTTGRPR). GTP-binding positions include arginine 304, 330–332 (KLD), and 412–414 (AVG).

This sequence belongs to the adenylosuccinate synthetase family. In terms of assembly, homodimer. Requires Mg(2+) as cofactor.

It is found in the cytoplasm. The catalysed reaction is IMP + L-aspartate + GTP = N(6)-(1,2-dicarboxyethyl)-AMP + GDP + phosphate + 2 H(+). The protein operates within purine metabolism; AMP biosynthesis via de novo pathway; AMP from IMP: step 1/2. Its function is as follows. Plays an important role in the de novo pathway of purine nucleotide biosynthesis. Catalyzes the first committed step in the biosynthesis of AMP from IMP. In Heliobacterium modesticaldum (strain ATCC 51547 / Ice1), this protein is Adenylosuccinate synthetase.